We begin with the raw amino-acid sequence, 388 residues long: Chorismate synthase (388 aa).

Positions 39 and 45 each coordinate NADP(+). Residues 130-132 (RSS), 251-252 (NA), Gly296, 311-315 (KPIPT), and Arg337 contribute to the FMN site.

This sequence belongs to the chorismate synthase family. In terms of assembly, homotetramer. Requires FMNH2 as cofactor.

The catalysed reaction is 5-O-(1-carboxyvinyl)-3-phosphoshikimate = chorismate + phosphate. It functions in the pathway metabolic intermediate biosynthesis; chorismate biosynthesis; chorismate from D-erythrose 4-phosphate and phosphoenolpyruvate: step 7/7. Functionally, catalyzes the anti-1,4-elimination of the C-3 phosphate and the C-6 proR hydrogen from 5-enolpyruvylshikimate-3-phosphate (EPSP) to yield chorismate, which is the branch point compound that serves as the starting substrate for the three terminal pathways of aromatic amino acid biosynthesis. This reaction introduces a second double bond into the aromatic ring system. The protein is Chorismate synthase of Streptococcus pneumoniae serotype 19F (strain G54).